The sequence spans 201 residues: UPF0177 protein YajF (201 aa).

Helical transmembrane passes span 10–30, 44–64, 82–102, 119–139, and 159–179; these read TVILALFLLFLSQVPLYYVEY, ITVNFILIGLLIILIAIMLGI, ILILILIIPSVALDILFSQFI, VMGSLLWFGKILGVALLAPIL, and FVFSSLLFTFMHSGYSWVFLI.

It belongs to the UPF0177 family.

It is found in the cell membrane. The protein is UPF0177 protein YajF (yajF) of Lactococcus lactis subsp. lactis (strain IL1403) (Streptococcus lactis).